The following is a 768-amino-acid chain: Levansucrase (768 aa).

The N-terminal stretch at methionine 1 to alanine 36 is a signal peptide. Polar residues-rich tracts occupy residues serine 57–leucine 68, threonine 80–asparagine 99, serine 106–aspartate 134, and asparagine 143–serine 153. The disordered stretch occupies residues serine 57 to leucine 158. Positions 250, 251, and 320 each coordinate sucrose. The active-site Nucleophile is aspartate 251. Residue aspartate 398 participates in Ca(2+) binding. Sucrose-binding residues include arginine 403 and aspartate 404. Ca(2+) contacts are provided by glutamine 429, asparagine 468, and aspartate 502. Glutamate 503 lines the sucrose pocket. The active-site Proton donor/acceptor is the glutamate 505. Residue arginine 523 participates in sucrose binding. A disordered region spans residues histidine 688–glycine 736. A compositionally biased stretch (low complexity) spans valine 691–threonine 727. The LPXTG sorting signal motif lies at leucine 732–glycine 736. Alanine 735 bears the Pentaglycyl murein peptidoglycan amidated alanine mark. A propeptide spans glycine 736–asparagine 768 (removed by sortase).

Belongs to the glycosyl hydrolase 68 family.

It is found in the secreted. It localises to the cell wall. The protein resides in the cell surface. The catalysed reaction is [6)-beta-D-fructofuranosyl-(2-&gt;](n) alpha-D-glucopyranoside + sucrose = [6)-beta-D-fructofuranosyl-(2-&gt;](n+1) alpha-D-glucopyranoside + D-glucose. Its activity is regulated as follows. Calcium ions are required for optimal activity, but do not seem to be essential since addition of EDTA causes only a 48% drop in activity. Ca(2+) may play an important structural role and promote stability of levansucrase. Functionally, fructosyltransferase that catalyzes the polymerization of the fructose moiety of sucrose to produce levan polymer and the fructo-oligosaccharide (FOS) 1-kestose. Is also able to convert raffinose into a fructan polymer and a single oligosaccharide (most likely Gal-Glc-Frc-Frc) in vitro; however, L.gasseri strain DSM 20077 is unable to ferment raffinose. Also displays sucrose hydrolase activity. This Lactobacillus gasseri protein is Levansucrase.